The following is a 1321-amino-acid chain: Insulin receptor substrate 2 (1321 aa).

Over residues 1–10 the composition is skewed to pro residues; it reads MASAPLPGPP. 2 disordered regions span residues 1–32 and 51–73; these read MASA…HSVR and RGPG…PPRL. The 129-residue stretch at 16 to 144 folds into the PH domain; that stretch reads DGPNLNNNNN…WYRALTDLVS (129 aa). Over residues 18-28 the composition is skewed to low complexity; the sequence is PNLNNNNNNNN. One can recognise an IRS-type PTB domain in the interval 191–295; sequence YREVWQVNLK…EAMKALKELF (105 aa). The tract at residues 299–536 is disordered; that stretch reads PRSKSQSSGS…ARDGSGGELY (238 aa). A phosphoserine mark is found at Ser303 and Ser343. Thr347 bears the Phosphothreonine mark. Ser362 carries the phosphoserine modification. Positions 364–376 are enriched in gly residues; it reads GDGGAAGGAGTAG. Residues Ser381, Ser385, and Ser388 each carry the phosphoserine modification. The residue at position 409 (Arg409) is an Omega-N-methylarginine. Low complexity-rich tracts occupy residues 435 to 456 and 478 to 490; these read SPPA…SGSY and PSSG…GSPS. The residue at position 517 (Thr517) is a Phosphothreonine. Residue Ser520 is modified to Phosphoserine. Residue Thr524 is modified to Phosphothreonine. Position 536 is a phosphotyrosine; by INSR (Tyr536). A YXXM motif 1 motif is present at residues 536-539; sequence YGYM. At Ser556 the chain carries Phosphoserine; by PLK1. Ser573 carries the post-translational modification Phosphoserine. Residues Thr575 and Thr576 each carry the phosphothreonine modification. Ser590 carries the post-translational modification Phosphoserine. The YXXM motif 2 signature appears at 594 to 597; it reads YTLM. Ser604 and Ser616 each carry phosphoserine. Tyr649 bears the Phosphotyrosine mark. 2 short sequence motifs (YXXM motif) span residues 649-652 and 671-674; these read YMPM. Position 671 is a phosphotyrosine; by INSR (Tyr671). A phosphoserine mark is found at Ser675, Ser678, Ser727, and Ser728. A YXXM motif 5 motif is present at residues 734–737; sequence YMRM. Phosphoserine is present on Ser762. Thr771 is modified (phosphothreonine). Ser796 carries the phosphoserine modification. The YXXM motif 6 motif lies at 814-817; sequence YVLM. Ser819 carries the post-translational modification Phosphoserine. Disordered stretches follow at residues 834-871 and 888-1091; these read ATPG…RPEG and EGLQ…ASPT. Ser907 is subject to Phosphoserine. At Tyr911 the chain carries Phosphotyrosine; by INSR. A compositionally biased stretch (low complexity) spans 930–959; sequence LLASAASSSSLLSASSPASSLGSGTPGTSS. Ser965 is subject to Phosphoserine. Phosphotyrosine; by INSR is present on Tyr970. Pro residues predominate over residues 1005–1014; it reads PYPPLPPRPS. The span at 1039–1055 shows a compositional bias: polar residues; sequence AATSQGPTAGSSMSSEP. The YXXM motif 7 motif lies at 1061–1064; that stretch reads YTEM. At Thr1071 the chain carries Phosphothreonine. The span at 1072-1082 shows a compositional bias: pro residues; the sequence is PPQPIVAPPKP. Ser1089 carries the phosphoserine modification. Ser1098 bears the Phosphoserine; by PLK1 mark. The segment at 1110–1198 is disordered; it reads LQVSQPPDPH…TSPGQAQPLV (89 aa). Positions 1139–1154 are enriched in low complexity; it reads ETFSSTTTVTPVSPSF. Phosphothreonine is present on Thr1148. Phosphoserine occurs at positions 1151, 1163, 1165, 1175, and 1190. Residues 1163 to 1179 are compositionally biased toward polar residues; sequence SASVENVSLRKSSEGSS. Residue Tyr1242 is modified to Phosphotyrosine; by INSR. The segment at 1251–1275 is disordered; that stretch reads QGSLAQSQPQPGDKNSWSRTRSLGG. Residues 1253-1271 are compositionally biased toward polar residues; the sequence is SLAQSQPQPGDKNSWSRTR. Position 1303 is a phosphotyrosine; by INSR (Tyr1303). A Glycyl lysine isopeptide (Lys-Gly) (interchain with G-Cter in ubiquitin) cross-link involves residue Lys1314.

As to quaternary structure, interacts with PHIP. Interacts with SH2B1; this interaction enhances leptin-induced activation of the PI3-kinase pathway. Interacts with GRB2. Interacts with PIK3R1. Interacts with DVL2; this interaction promotes the Wnt/beta-catenin signaling pathway. Phosphorylation fluctuates in a cell-cycle dependent manner with hyperphosphorylation during mitosis. Phosphorylated at Ser-556 and Ser-1098 by PLK1; these phosphorylations prevent the activation of the PI3K pathway upon growth factor stimulation by inhibiting the binding between IRS2 and the PI3K pathway components and increasing the level of IRS2 protein degradation. In addition, they prevent premature mitotic exit. Post-translationally, monoubiquitinated by NEDD4; leading to enhanced IGF1 signaling. During cell cycle, ubiquitination and proteasomal degradation are controlled by FZR1. In terms of tissue distribution, skeletal muscle, lung, brain, liver, kidney, heart and spleen.

The protein localises to the cytoplasm. The protein resides in the cytosol. Its function is as follows. Signaling adapter protein that participates in the signal transduction from two prominent receptor tyrosine kinases, insulin receptor/INSR and insulin-like growth factor I receptor/IGF1R. Plays therefore an important role in development, growth, glucose homeostasis as well as lipid metabolism. Upon phosphorylation by the insulin receptor, functions as a signaling scaffold that propagates insulin action through binding to SH2 domain-containing proteins including the p85 regulatory subunit of PI3K, NCK1, NCK2, GRB2 or SHP2. Recruitment of GRB2 leads to the activation of the guanine nucleotide exchange factor SOS1 which in turn triggers the Ras/Raf/MEK/MAPK signaling cascade. Activation of the PI3K/AKT pathway is responsible for most of insulin metabolic effects in the cell, and the Ras/Raf/MEK/MAPK is involved in the regulation of gene expression and in cooperation with the PI3K pathway regulates cell growth and differentiation. Acts a positive regulator of the Wnt/beta-catenin signaling pathway through suppression of DVL2 autophagy-mediated degradation leading to cell proliferation. Plays a role in cell cycle progression by promoting a robust spindle assembly checkpoint (SAC) during M-phase. In macrophages, IL4-induced tyrosine phosphorylation of IRS2 leads to the recruitment and activation of phosphoinositide 3-kinase (PI3K). This Mus musculus (Mouse) protein is Insulin receptor substrate 2 (Irs2).